The chain runs to 561 residues: Liver carboxylesterase 1F (561 aa).

A signal peptide spans 1–18; the sequence is MCLSFLFLVSLATCVVYG. An N-linked (GlcNAc...) asparagine glycan is attached at Asn79. A disulfide bond links Cys87 and Cys116. Catalysis depends on Ser221, which acts as the Acyl-ester intermediate. The cysteines at positions 273 and 284 are disulfide-linked. Active-site charge relay system residues include Glu353 and His466. The Prevents secretion from ER signature appears at 558–561; it reads HNEL.

The protein belongs to the type-B carboxylesterase/lipase family. Expressed in liver and kidney.

The protein localises to the lipid droplet. It localises to the cytoplasm. Its subcellular location is the cytosol. The protein resides in the endoplasmic reticulum. It is found in the microsome. It catalyses the reaction a carboxylic ester + H2O = an alcohol + a carboxylate + H(+). The enzyme catalyses all-trans-retinyl hexadecanoate + H2O = all-trans-retinol + hexadecanoate + H(+). Functionally, involved in the detoxification of xenobiotics and in the activation of ester and amide prodrugs. Hydrolyzes retinyl esters. Hydrolyzes p-nitrophenyl butyrate (PNPB), triacylglycerol and monoacylglycerol. Shows higher activity against PNPB, a short-chain fatty acid ester, than against triolein, a long-chain fatty acid ester. Shows no detectable activity against diacylglycerol, cholesterol ester or phospholipids. May play a role in adipocyte lipolysis. In Rattus norvegicus (Rat), this protein is Liver carboxylesterase 1F.